We begin with the raw amino-acid sequence, 469 residues long: ATP sulfurylase 4, chloroplastic (469 aa).

The transit peptide at 1–51 (MASSAAAIVSGSPFRSSPLIHNHHASRYAPGSISVVSLPRQVSRRGLSVKS) directs the protein to the chloroplast.

This sequence belongs to the sulfate adenylyltransferase family. As to quaternary structure, homotetramer. Expressed in roots and leaves.

The protein resides in the plastid. Its subcellular location is the chloroplast stroma. It carries out the reaction sulfate + ATP + H(+) = adenosine 5'-phosphosulfate + diphosphate. It participates in sulfur metabolism; hydrogen sulfide biosynthesis; sulfite from sulfate: step 1/3. Sulfate adenylyltransferase. Catalyzes the first step of the sulfate assimilation pathway. The polypeptide is ATP sulfurylase 4, chloroplastic (APS4) (Arabidopsis thaliana (Mouse-ear cress)).